Here is a 628-residue protein sequence, read N- to C-terminus: Basal cell adhesion molecule (628 aa).

The N-terminal stretch at 1–31 (MEPPDAPAQARGAPRLLLLAVLLAAHPDAQA) is a signal peptide. Ig-like V-type domains follow at residues 32–142 (EVRL…ARLN) and 147–257 (PEAT…PTFH). The Extracellular segment spans residues 32–547 (EVRLSVPPLV…GTVSPQTSQA (516 aa)). 3 disulfide bridges follow: Cys-53/Cys-125, Cys-172/Cys-237, and Cys-291/Cys-337. Ig-like C2-type domains are found at residues 274–355 (PSTP…KTLE), 363–441 (PLEL…QNFT), and 448–541 (PELK…GTVS). Residues 309-312 (EQEE) form an interaction with laminin alpha5 region. Asn-321, Asn-377, Asn-383, Asn-419, and Asn-439 each carry an N-linked (GlcNAc...) asparagine glycan. Cys-384 and Cys-424 are disulfide-bonded. Cys-473 and Cys-522 are disulfide-bonded. A helical membrane pass occupies residues 548–568 (GVAVMAVAVSVGLLLLVVAVF). At 569–628 (YCVRRKGGPCCRQRREKGAPPPGEPGLSHSGSEQPEQTGLLMGGASGGARGGSGGFGDEC) the chain is on the cytoplasmic side. Positions 579 to 628 (CRQRREKGAPPPGEPGLSHSGSEQPEQTGLLMGGASGGARGGSGGFGDEC) are disordered. A Phosphoserine; by GSK3 modification is found at Ser-596. Phosphoserine; by CK2 is present on Ser-598. At Ser-600 the chain carries Phosphoserine. A compositionally biased stretch (gly residues) spans 609 to 628 (LMGGASGGARGGSGGFGDEC). The residue at position 621 (Ser-621) is a Phosphoserine; by PKA or PKB/AKT1.

In terms of assembly, homodimer. Interacts with ITGA4:ITGB1. Interacts with spectrins SPTA1 and SPTB1. In terms of processing, epinephrine-stimulated phosphorylation of Ser-621 by PKA enhances adhesion to laminin. Ser-621 can also be phosphorylated by AKT1. In terms of tissue distribution, wide tissue distribution (highest in the pancreas and very low in brain). Closely associated with the basal layer of cells in epithelia and the endothelium of blood vessel walls.

It is found in the cell membrane. Its function is as follows. Transmembrane glycoprotein that functions as both a receptor and an adhesion molecule playing a crucial role in cell adhesion, motility, migration and invasion. Extracellular domain enables binding to extracellular matrix proteins, such as laminin, integrin and other ligands while its intracellular domain interacts with cytoskeletal proteins like hemoglobin, facilitating cell signal transduction. Serves as a receptor for laminin alpha-5/LAMA5 to promote cell adhesion. Mechanistically, JAK2 induces BCAM phosphorylation and activates its adhesion to laminin by stimulating a Rap1/AKT signaling pathway in the absence of EPOR. The chain is Basal cell adhesion molecule (BCAM) from Homo sapiens (Human).